Reading from the N-terminus, the 262-residue chain is ATP synthase subunit a (262 aa).

5 consecutive transmembrane segments (helical) span residues 24–44 (AVHLDTLFFSLVAGVLFLVVF), 85–105 (IAPLALTIFCWVFIMNAIDLV), 129–149 (DISATLGMSICVFGLILFYTV), 194–214 (LFGNMYAGELIFILIAVMYMA), and 228–248 (LVWAIFHILVITLQAFIFMML).

The protein belongs to the ATPase A chain family. F-type ATPases have 2 components, CF(1) - the catalytic core - and CF(0) - the membrane proton channel. CF(1) has five subunits: alpha(3), beta(3), gamma(1), delta(1), epsilon(1). CF(0) has three main subunits: a(1), b(2) and c(9-12). The alpha and beta chains form an alternating ring which encloses part of the gamma chain. CF(1) is attached to CF(0) by a central stalk formed by the gamma and epsilon chains, while a peripheral stalk is formed by the delta and b chains.

It is found in the cell inner membrane. Its function is as follows. Key component of the proton channel; it plays a direct role in the translocation of protons across the membrane. The sequence is that of ATP synthase subunit a from Haemophilus ducreyi (strain 35000HP / ATCC 700724).